The chain runs to 199 residues: NAD(P)H dehydrogenase (quinone) (199 aa).

The Flavodoxin-like domain maps to 4-190; that stretch reads ILVLYYSMYG…AIARFQGEHV (187 aa). FMN contacts are provided by residues 10–15 and 79–81; these read SMYGHI and TRF. Tyr-12 is a binding site for NAD(+). Residue Trp-99 participates in substrate binding. Residues 114–119 and His-134 contribute to the FMN site; that span reads STGTGG.

Belongs to the WrbA family. FMN is required as a cofactor.

The enzyme catalyses a quinone + NADH + H(+) = a quinol + NAD(+). The catalysed reaction is a quinone + NADPH + H(+) = a quinol + NADP(+). This is NAD(P)H dehydrogenase (quinone) from Yersinia enterocolitica serotype O:8 / biotype 1B (strain NCTC 13174 / 8081).